A 170-amino-acid chain; its full sequence is Protein SprT (170 aa).

The SprT-like domain maps to 25–165 (SEQFFDRTFA…QYCKGRLEPV (141 aa)). Histidine 78 is a binding site for Zn(2+). Residue glutamate 79 is part of the active site. Histidine 82 contributes to the Zn(2+) binding site.

The protein belongs to the SprT family. Requires Zn(2+) as cofactor.

The protein resides in the cytoplasm. The chain is Protein SprT from Actinobacillus succinogenes (strain ATCC 55618 / DSM 22257 / CCUG 43843 / 130Z).